We begin with the raw amino-acid sequence, 208 residues long: ATP-dependent Clp protease proteolytic subunit (208 aa).

The active-site Nucleophile is S106. H131 is a catalytic residue.

Belongs to the peptidase S14 family. As to quaternary structure, fourteen ClpP subunits assemble into 2 heptameric rings which stack back to back to give a disk-like structure with a central cavity, resembling the structure of eukaryotic proteasomes.

It localises to the cytoplasm. The enzyme catalyses Hydrolysis of proteins to small peptides in the presence of ATP and magnesium. alpha-casein is the usual test substrate. In the absence of ATP, only oligopeptides shorter than five residues are hydrolyzed (such as succinyl-Leu-Tyr-|-NHMec, and Leu-Tyr-Leu-|-Tyr-Trp, in which cleavage of the -Tyr-|-Leu- and -Tyr-|-Trp bonds also occurs).. In terms of biological role, cleaves peptides in various proteins in a process that requires ATP hydrolysis. Has a chymotrypsin-like activity. Plays a major role in the degradation of misfolded proteins. This Dinoroseobacter shibae (strain DSM 16493 / NCIMB 14021 / DFL 12) protein is ATP-dependent Clp protease proteolytic subunit.